The sequence spans 418 residues: MLDINRIVQNPEELLSTLQKRGVVSSDIEAKIKSVSEKQRILKLEVEELRAERNRVSKEIGIQKSQGKDITEISNSMKGVGDRIKSIEEELTKEEESLHELNLGLPNLLDPSVPEGKSEEDNVLIRQWGEIPKLSFEAKTHFDIGEKLGIFDFERGVKLSGARFYTYRGLGAKLERSLMNLMLDTHTSENGYEEMWVPVLVNDESMTATGQLPKFAEDFYRLEKDGLNLIPTAEVPLTNYYRDEIIQEKELPISVCAHTSCFRREAGSYGRDTRGLVRVHQFQKVELVKFVEPEKSGEAHEKMLQDAESILQKLKLPYRVMLLCSKDMSSASSKTYDIEVWMPGLGRFMEISSVSNFKDYQARRGKIRYKSKEGKNLLVHTLNGSGLAIGRTLAAVIENYQSEDGTFQIPDVLKPYIR.

Thr-232–Glu-234 contacts L-serine. ATP is bound by residues Arg-263–Glu-265 and Val-279. Glu-286 lines the L-serine pocket. Glu-350–Ser-353 lines the ATP pocket. An L-serine-binding site is contributed by Ser-385.

Belongs to the class-II aminoacyl-tRNA synthetase family. Type-1 seryl-tRNA synthetase subfamily. As to quaternary structure, homodimer. The tRNA molecule binds across the dimer.

It localises to the cytoplasm. It carries out the reaction tRNA(Ser) + L-serine + ATP = L-seryl-tRNA(Ser) + AMP + diphosphate + H(+). It catalyses the reaction tRNA(Sec) + L-serine + ATP = L-seryl-tRNA(Sec) + AMP + diphosphate + H(+). It participates in aminoacyl-tRNA biosynthesis; selenocysteinyl-tRNA(Sec) biosynthesis; L-seryl-tRNA(Sec) from L-serine and tRNA(Sec): step 1/1. In terms of biological role, catalyzes the attachment of serine to tRNA(Ser). Is also able to aminoacylate tRNA(Sec) with serine, to form the misacylated tRNA L-seryl-tRNA(Sec), which will be further converted into selenocysteinyl-tRNA(Sec). The chain is Serine--tRNA ligase from Leptospira biflexa serovar Patoc (strain Patoc 1 / Ames).